The chain runs to 424 residues: Serine--tRNA ligase (424 aa).

L-serine is bound at residue 230 to 232; that stretch reads TAE. An ATP-binding site is contributed by 261-263; that stretch reads RSE. Residue glutamate 284 participates in L-serine binding. 348–351 is a binding site for ATP; it reads EISS. Position 382 (serine 382) interacts with L-serine.

This sequence belongs to the class-II aminoacyl-tRNA synthetase family. Type-1 seryl-tRNA synthetase subfamily. As to quaternary structure, homodimer. The tRNA molecule binds across the dimer.

It is found in the cytoplasm. The catalysed reaction is tRNA(Ser) + L-serine + ATP = L-seryl-tRNA(Ser) + AMP + diphosphate + H(+). It catalyses the reaction tRNA(Sec) + L-serine + ATP = L-seryl-tRNA(Sec) + AMP + diphosphate + H(+). The protein operates within aminoacyl-tRNA biosynthesis; selenocysteinyl-tRNA(Sec) biosynthesis; L-seryl-tRNA(Sec) from L-serine and tRNA(Sec): step 1/1. Catalyzes the attachment of serine to tRNA(Ser). Is also able to aminoacylate tRNA(Sec) with serine, to form the misacylated tRNA L-seryl-tRNA(Sec), which will be further converted into selenocysteinyl-tRNA(Sec). The sequence is that of Serine--tRNA ligase from Solibacter usitatus (strain Ellin6076).